Consider the following 219-residue polypeptide: PKHD-type hydroxylase Mmar10_1675 (219 aa).

Residues 77–171 (TLSRILVSRY…RVAVVGWVRS (95 aa)) form the Fe2OG dioxygenase domain. H95, D97, and H152 together coordinate Fe cation. Residue R162 coordinates 2-oxoglutarate.

Requires Fe(2+) as cofactor. L-ascorbate is required as a cofactor.

The chain is PKHD-type hydroxylase Mmar10_1675 from Maricaulis maris (strain MCS10) (Caulobacter maris).